Reading from the N-terminus, the 160-residue chain is Putative 4-hydroxy-4-methyl-2-oxoglutarate aldolase (160 aa).

Substrate contacts are provided by residues 75-78 (GDQL) and Arg-97. Asp-98 contacts a divalent metal cation.

This sequence belongs to the class II aldolase/RraA-like family. Homotrimer. It depends on a divalent metal cation as a cofactor.

The catalysed reaction is 4-hydroxy-4-methyl-2-oxoglutarate = 2 pyruvate. It catalyses the reaction oxaloacetate + H(+) = pyruvate + CO2. Catalyzes the aldol cleavage of 4-hydroxy-4-methyl-2-oxoglutarate (HMG) into 2 molecules of pyruvate. Also contains a secondary oxaloacetate (OAA) decarboxylase activity due to the common pyruvate enolate transition state formed following C-C bond cleavage in the retro-aldol and decarboxylation reactions. This chain is Putative 4-hydroxy-4-methyl-2-oxoglutarate aldolase, found in Vibrio parahaemolyticus serotype O3:K6 (strain RIMD 2210633).